A 150-amino-acid chain; its full sequence is UPF0756 membrane protein YE1142 (150 aa).

Transmembrane regions (helical) follow at residues 1-21 (MAAL…GIIS), 51-71 (YGLT…IASG), 88-108 (ILAI…VSLM), and 114-134 (VVAG…GVPV).

It belongs to the UPF0756 family.

The protein resides in the cell membrane. In Yersinia enterocolitica serotype O:8 / biotype 1B (strain NCTC 13174 / 8081), this protein is UPF0756 membrane protein YE1142.